Consider the following 661-residue polypeptide: MADSISGTPLLTQPERLERRLKDIPAEPGCYLMRDGDDRILYVGKSKTLRSRVRSYFRSRHDLSPRIRLMTRQVCEIEFIVTDSEAEALALESNLIKNHQPHFNVLLKDDKKYPYLCITWSESYPRIFITRRRRFRSPLDRFYGPYVDVGLLRRTLFLVKRVFPLRQRPRPLHQDRTCLNYSIGRCPGVCQEKISSDDYHQTLRKVAMVFQGRSDELQNLLQEQMHKYADRTDYESAARVRDQLQGLDQLTADQKMSLPDSSVSRDVLALACDERLAAVQLFQMRAGKLVGRLGYTADAAGLSPGLILQRVIEEHYSQVDAVEVPPQLLVQHPLPQQSLLEEWLTEQRERKVQIHCPQRRQKADLIELVQRNAEFELLRAKQGQEQQALSTEDLAQLLDLPLPPRRIEGYDISHIQGSDAVASQVVFIDGLPAKQHYRKYKIQSSSIRAGHSDDFMAMAEIMRRRFRRWARAKADGLDLGALRQKGGSALQTDGLNDWPDLVMIDGGKGQLSAVMEALRELNLHDDLNVCSLAKQREEVFLPGESQPLESEADQLGVALLRRLRDEAHRFAVSFHRQQRGERMKRSRLSDIPGLGAKRVRDLLSHFHSIDAIQLASVDTLSKAPGVGPVLAQDIFNFFHPTDENDGLPSSQLEGEQLEHSA.

The GIY-YIG domain occupies 26 to 105 (AEPGCYLMRD…IKNHQPHFNV (80 aa)). The UVR domain maps to 215 to 250 (DELQNLLQEQMHKYADRTDYESAARVRDQLQGLDQL).

Belongs to the UvrC family. As to quaternary structure, interacts with UvrB in an incision complex.

It localises to the cytoplasm. Functionally, the UvrABC repair system catalyzes the recognition and processing of DNA lesions. UvrC both incises the 5' and 3' sides of the lesion. The N-terminal half is responsible for the 3' incision and the C-terminal half is responsible for the 5' incision. The sequence is that of UvrABC system protein C from Synechococcus sp. (strain CC9902).